Here is an 827-residue protein sequence, read N- to C-terminus: Glycerol-3-phosphate acyltransferase (827 aa).

Positions 309–314 (CHRSHI) match the HXXXXD motif motif.

The protein belongs to the GPAT/DAPAT family.

It localises to the cell inner membrane. The enzyme catalyses sn-glycerol 3-phosphate + an acyl-CoA = a 1-acyl-sn-glycero-3-phosphate + CoA. It participates in phospholipid metabolism; CDP-diacylglycerol biosynthesis; CDP-diacylglycerol from sn-glycerol 3-phosphate: step 1/3. The sequence is that of Glycerol-3-phosphate acyltransferase from Ectopseudomonas mendocina (strain ymp) (Pseudomonas mendocina).